The following is an 848-amino-acid chain: Coiled-coil domain-containing protein 110 (848 aa).

The interval 41–62 (SEGVKESGGNEPEYGCASEPEN) is disordered. The stretch at 442–794 (LQNYLKESLQ…LSDKVSSQNN (353 aa)) forms a coiled coil. Position 620 is a phosphoserine (S620).

The protein localises to the nucleus. This is Coiled-coil domain-containing protein 110 (Ccdc110) from Mus musculus (Mouse).